Reading from the N-terminus, the 293-residue chain is Plant cysteine oxidase 1 (293 aa).

Residues His-148, His-150, and His-211 each coordinate Fe cation. The disordered stretch occupies residues 250–293; the sequence is SEDDDVLSSEEEKEGYAWLQERDDNPEDHTNVVGALYRGPKVED. Residues 251-262 are compositionally biased toward acidic residues; that stretch reads EDDDVLSSEEEK. Basic and acidic residues predominate over residues 269-279; sequence QERDDNPEDHT.

This sequence belongs to the cysteine dioxygenase family. Fe(2+) serves as cofactor.

The protein resides in the nucleus. Its subcellular location is the cytoplasm. The catalysed reaction is L-cysteine + O2 = 3-sulfino-L-alanine + H(+). Its function is as follows. Catalyzes the oxidation of N-terminal cysteine residues (N-Cys), thus preparing the protein for N-end rule pathway-mediated proteasomal degradation, upstream of the N-end rule enzymes ATE1, ATE2 and PRT6. Controls the preparation of the group VII ethylene response factor (ERF-VII) proteins for degradation via the 26S proteasome N-end rule pathway. Acts as an oxygen sensor that controls the stability of ERF-VII proteins, which are stabilized in flooding-induced hypoxia, and regulate transcriptional adaptation to these adverse conditions. Not active on Cys located inside or at the C-terminus of a peptide. Acts redundantly with PCO2 to repress the anaerobic response. In Arabidopsis thaliana (Mouse-ear cress), this protein is Plant cysteine oxidase 1.